We begin with the raw amino-acid sequence, 662 residues long: Zinc finger protein 800 (662 aa).

The segment at 69 to 91 (FECKLCRSLFRGLPNLITHKKFY) adopts a C2H2-type 1; degenerate zinc-finger fold. K132 is covalently cross-linked (Glycyl lysine isopeptide (Lys-Gly) (interchain with G-Cter in SUMO2)). Disordered stretches follow at residues 172–197 (ETSSEQLKAVPDADTEVEEAIEPPSI) and 205–224 (AAPTEEQPQESQADLETSDS). Residues 205-216 (AAPTEEQPQESQ) are compositionally biased toward low complexity. The C2H2-type 2 zinc finger occupies 231–254 (LICCLCRKEFNSRRGVRRHIRKVH). Residue K280 forms a Glycyl lysine isopeptide (Lys-Gly) (interchain with G-Cter in SUMO2) linkage. The C2H2-type 3 zinc finger occupies 288-311 (RSCPVCCKSFATKANVRRHFDEVH). A Phosphoserine modification is found at S318. Residues 319–349 (ITPDIATKPGQPLFLDSASPKKSFKTRKQKS) are disordered. The residue at position 320 (T320) is a Phosphothreonine. Residue S337 is modified to Phosphoserine. Residues 340-349 (KSFKTRKQKS) show a composition bias toward basic residues. The C2H2-type 4 zinc-finger motif lies at 357 to 382 (TACKCLLCKRKYSSQIMLKRHMQIVH). The disordered stretch occupies residues 389–473 (ANSKREKGPN…AGGQQKTRKP (85 aa)). K392 is covalently cross-linked (Glycyl lysine isopeptide (Lys-Gly) (interchain with G-Cter in SUMO2)). The segment covering 414–434 (VESSPPSITHSPQNELKGTNH) has biased composition (polar residues). 6 positions are modified to phosphoserine: S420, S424, S453, S455, S458, and S460. Over residues 456-468 (PKSASPSAAGGQQ) the composition is skewed to low complexity. Residue K474 forms a Glycyl lysine isopeptide (Lys-Gly) (interchain with G-Cter in SUMO2) linkage. 2 C2H2-type zinc fingers span residues 484–506 (LYCKLCKRQFTSKQNLTKHIELH) and 517–540 (YKCPLCTYETRRKRDVIRHITVVH). Disordered stretches follow at residues 573–597 (RGPSREEAKHNDSKQDGTSNSPSKK) and 633–662 (HHKKTHKANATNSPEGNKTKGRSTRSKALV). A compositionally biased stretch (basic and acidic residues) spans 575–587 (PSREEAKHNDSKQ). Residue K597 forms a Glycyl lysine isopeptide (Lys-Gly) (interchain with G-Cter in SUMO2) linkage. A C2H2-type 7 zinc finger spans residues 616–638 (HRCNKCGKAFAKKTYLEHHKKTH). Positions 651–662 (TKGRSTRSKALV) are enriched in basic residues.

The protein belongs to the krueppel C2H2-type zinc-finger protein family.

The protein resides in the nucleus. Functionally, may be involved in transcriptional regulation. The sequence is that of Zinc finger protein 800 (Znf800) from Mus musculus (Mouse).